Reading from the N-terminus, the 209-residue chain is Small ribosomal subunit protein uS3 (209 aa).

Positions 17 to 86 constitute a KH type-2 domain; that stretch reads IDEYLEKELR…NPQIEVEEIK (70 aa).

The protein belongs to the universal ribosomal protein uS3 family. In terms of assembly, part of the 30S ribosomal subunit.

Its function is as follows. Binds the lower part of the 30S subunit head. In Thermococcus gammatolerans (strain DSM 15229 / JCM 11827 / EJ3), this protein is Small ribosomal subunit protein uS3.